A 363-amino-acid chain; its full sequence is Chorismate synthase (363 aa).

NADP(+)-binding residues include R48 and R54. FMN-binding positions include 125–127 (RSS), 237–238 (NA), G277, 292–296 (KPTSS), and R318.

The protein belongs to the chorismate synthase family. Homotetramer. FMNH2 serves as cofactor.

It carries out the reaction 5-O-(1-carboxyvinyl)-3-phosphoshikimate = chorismate + phosphate. It functions in the pathway metabolic intermediate biosynthesis; chorismate biosynthesis; chorismate from D-erythrose 4-phosphate and phosphoenolpyruvate: step 7/7. Its function is as follows. Catalyzes the anti-1,4-elimination of the C-3 phosphate and the C-6 proR hydrogen from 5-enolpyruvylshikimate-3-phosphate (EPSP) to yield chorismate, which is the branch point compound that serves as the starting substrate for the three terminal pathways of aromatic amino acid biosynthesis. This reaction introduces a second double bond into the aromatic ring system. The sequence is that of Chorismate synthase from Pseudomonas putida (strain GB-1).